A 198-amino-acid polypeptide reads, in one-letter code: Glycerol-3-phosphate acyltransferase 1 (198 aa).

The next 5 membrane-spanning stretches (helical) occupy residues 5–25 (ALLALLLSYLIGAIPAAAWLA), 52–72 (GPALLVASFDILKGVLAVLLA), 81–101 (WAALCGVLAVIGHNFSPFLAF), 111–131 (FGVIAILDPVLGLTTFVLAIA), and 138–158 (FVSAGSIMGAFIAGALVLVLP).

The protein belongs to the PlsY family. As to quaternary structure, probably interacts with PlsX.

The protein resides in the cell membrane. It carries out the reaction an acyl phosphate + sn-glycerol 3-phosphate = a 1-acyl-sn-glycero-3-phosphate + phosphate. Its pathway is lipid metabolism; phospholipid metabolism. Functionally, catalyzes the transfer of an acyl group from acyl-phosphate (acyl-PO(4)) to glycerol-3-phosphate (G3P) to form lysophosphatidic acid (LPA). This enzyme utilizes acyl-phosphate as fatty acyl donor, but not acyl-CoA or acyl-ACP. The polypeptide is Glycerol-3-phosphate acyltransferase 1 (Deinococcus radiodurans (strain ATCC 13939 / DSM 20539 / JCM 16871 / CCUG 27074 / LMG 4051 / NBRC 15346 / NCIMB 9279 / VKM B-1422 / R1)).